The primary structure comprises 242 residues: Protein odd-skipped-related 1 (242 aa).

3 consecutive C2H2-type zinc fingers follow at residues 128–150 (FICK…ERTH), 156–178 (FHCE…KYIH), and 184–207 (HKCE…SCHH).

It belongs to the Odd C2H2-type zinc-finger protein family.

The protein resides in the nucleus. May function as transcription regulator. Essential for larval development. Required for morphogenesis and function of the digestive tract. This chain is Protein odd-skipped-related 1, found in Caenorhabditis elegans.